Here is a 128-residue protein sequence, read N- to C-terminus: Holo-[acyl-carrier-protein] synthase (128 aa).

The Mg(2+) site is built by D8 and E59.

Belongs to the P-Pant transferase superfamily. AcpS family. Mg(2+) serves as cofactor.

Its subcellular location is the cytoplasm. The catalysed reaction is apo-[ACP] + CoA = holo-[ACP] + adenosine 3',5'-bisphosphate + H(+). Transfers the 4'-phosphopantetheine moiety from coenzyme A to a Ser of acyl-carrier-protein. The sequence is that of Holo-[acyl-carrier-protein] synthase from Rickettsia typhi (strain ATCC VR-144 / Wilmington).